Consider the following 197-residue polypeptide: Adenylate kinase isoenzyme 6 homolog FAP7 (197 aa).

Glycine 17, glycine 19, lysine 20, serine 21, and serine 22 together coordinate ATP. The tract at residues 38–61 (NISDFAKDNDCFEGYDEGRKSHIV) is NMPbind. Residues 113–123 (ARGYHDSKIEE) are LID. An ATP-binding site is contributed by arginine 114. The segment at 176-197 (PDGVTNEYQGPRSDDEDDEDSE) is disordered. Tyrosine 183 carries the phosphotyrosine modification. Residues serine 188 and serine 196 each carry the phosphoserine modification.

It belongs to the adenylate kinase family. AK6 subfamily. In terms of assembly, interacts with small ribosomal subunit protein uS11B/RPS14B. Not a structural component of 43S pre-ribosomes, but transiently interacts with them by binding to uS11/RPS14.

The protein localises to the cytoplasm. Its subcellular location is the nucleus. The enzyme catalyses AMP + ATP = 2 ADP. It catalyses the reaction ATP + H2O = ADP + phosphate + H(+). Broad-specificity nucleoside monophosphate (NMP) kinase that catalyzes the reversible transfer of the terminal phosphate group between nucleoside triphosphates and monophosphates. Also has ATPase activity. Involved in the late cytoplasmic maturation steps of the 40S ribosomal particles, specifically 18S rRNA maturation. Required for cleavage of the 20S pre-rRNA at site D in the cytoplasm. While NMP activity is not required for ribosome maturation, ATPase activity is. Associates transiently with small ribosomal subunit protein uS11. ATP hydrolysis breaks the interaction with uS11. May temporarily remove uS11 from the ribosome to enable a conformational change of the ribosomal RNA that is needed for the final maturation step of the small ribosomal subunit. Promotes formation of the rotated state in 80S-like ribosomes, a key intermediate in translocation, thereby releasing the essential assembly factor DIM1 from pre-40S subunits. Its NMP activity may have a role in nuclear energy homeostasis. Involved in oxidative stress response. Required for POS9-dependent target gene transcription upon oxidative stress. The chain is Adenylate kinase isoenzyme 6 homolog FAP7 from Saccharomyces cerevisiae (strain ATCC 204508 / S288c) (Baker's yeast).